The following is a 393-amino-acid chain: Protein TsgA (393 aa).

Transmembrane regions (helical) follow at residues W11–M31, F51–P71, F78–L98, T101–I121, L134–F154, W162–G182, I206–I226, T245–L265, I273–P293, A297–L317, F332–V352, and L361–V381.

Belongs to the major facilitator superfamily. TsgA family.

Its subcellular location is the cell inner membrane. The chain is Protein TsgA from Shigella boydii serotype 4 (strain Sb227).